The primary structure comprises 108 residues: Somatoliberin (108 aa).

The signal sequence occupies residues 1-20 (MPLWVFFFVILTLSNSSHCS). The propeptide occupies 21–31 (PPPPLTLRMRR). At leucine 75 the chain carries Leucine amide. Positions 78–108 (QVDSMWAEQKQMELESILVALLQKHSRNSQG) are excised as a propeptide.

This sequence belongs to the glucagon family.

Its subcellular location is the secreted. Its function is as follows. GRF is released by the hypothalamus and acts on the adenohypophyse to stimulate the secretion of growth hormone. In Homo sapiens (Human), this protein is Somatoliberin (GHRH).